The sequence spans 109 residues: Small serum protein 2 (109 aa).

The first 19 residues, 1–19 (MRVFFSLIIFSFMLATCQG), serve as a signal peptide directing secretion. Cystine bridges form between C21–C72, C39–C64, C59–C93, C62–C71, and C84–C107.

Forms a stable, non-covalent complex with serotriflin.

Its subcellular location is the secreted. Its function is as follows. May serve as a self-defense protein against the toxic effects of the snake venom during accidental envenomation. Does not show inhibitory activity towards brevilysin H6. In Protobothrops flavoviridis (Habu), this protein is Small serum protein 2.